The chain runs to 376 residues: MKTELNLFDRQLTLFRYPNNANETLQAWDAGDEYLINYVEELALDTPQNILILNDHFGALSCWFSAQHQVTMMSDSFISQQGAKENLQRNQCREVKLLTTLDAIPTETSLVLFQLPKNNRHLTWQLTQLRKTLSPDVPVVAVNKAKEIHTSTLKLFEKYLGTTKTSLAWKKHRLVFCQADCAQMNDISPVTRWNVEEHKMTLNNLPNVYSGESLDLGARFMLEHIPQDDNLKHIIDLGCGNGVLSVKAAQLNPKAKFTLVDESYMAIESARLNLQENVTASVDAEYIANNCLDGFAGEIADLILCNPPFHQQQAITDHIAWQMFCDAKRVLKRGGKLQVIGNRHLGYDGKLKRLYGDKNVKLVASNSKFVILQATK.

The protein belongs to the methyltransferase superfamily. RlmG family.

Its subcellular location is the cytoplasm. It catalyses the reaction guanosine(1835) in 23S rRNA + S-adenosyl-L-methionine = N(2)-methylguanosine(1835) in 23S rRNA + S-adenosyl-L-homocysteine + H(+). Specifically methylates the guanine in position 1835 (m2G1835) of 23S rRNA. This chain is Ribosomal RNA large subunit methyltransferase G, found in Vibrio vulnificus (strain CMCP6).